Consider the following 375-residue polypeptide: Anhydro-N-acetylmuramic acid kinase (375 aa).

12 to 19 is an ATP binding site; sequence GTSLDGVD.

The protein belongs to the anhydro-N-acetylmuramic acid kinase family.

It catalyses the reaction 1,6-anhydro-N-acetyl-beta-muramate + ATP + H2O = N-acetyl-D-muramate 6-phosphate + ADP + H(+). The protein operates within amino-sugar metabolism; 1,6-anhydro-N-acetylmuramate degradation. Its pathway is cell wall biogenesis; peptidoglycan recycling. Its function is as follows. Catalyzes the specific phosphorylation of 1,6-anhydro-N-acetylmuramic acid (anhMurNAc) with the simultaneous cleavage of the 1,6-anhydro ring, generating MurNAc-6-P. Is required for the utilization of anhMurNAc either imported from the medium or derived from its own cell wall murein, and thus plays a role in cell wall recycling. The polypeptide is Anhydro-N-acetylmuramic acid kinase (Variovorax paradoxus (strain S110)).